Reading from the N-terminus, the 160-residue chain is Transcription elongation factor GreA (160 aa).

Belongs to the GreA/GreB family.

Its function is as follows. Necessary for efficient RNA polymerase transcription elongation past template-encoded arresting sites. The arresting sites in DNA have the property of trapping a certain fraction of elongating RNA polymerases that pass through, resulting in locked ternary complexes. Cleavage of the nascent transcript by cleavage factors such as GreA or GreB allows the resumption of elongation from the new 3'terminus. GreA releases sequences of 2 to 3 nucleotides. The sequence is that of Transcription elongation factor GreA from Francisella tularensis subsp. tularensis (strain FSC 198).